The sequence spans 462 residues: Sensor histidine kinase RegB (462 aa).

Residues 1 to 25 (MILGPDGILNRDTRGDWWRLRTLIL) lie on the Cytoplasmic side of the membrane. Residues 26–45 (LRWMAVAGQLAAIVVTDWYL) traverse the membrane as a helical segment. Residues 46–51 (GVRLPM) are Extracellular-facing. The helical transmembrane segment at 52–70 (GLCFMAVGASVIANVIATF) threads the bilayer. Topologically, residues 71–78 (VFPQNRRL) are cytoplasmic. A helical membrane pass occupies residues 79 to 96 (TEFQALMILLFDLTQLSF). At 97–103 (LLFLTGG) the chain is on the extracellular side. A helical transmembrane segment spans residues 104–123 (LTNPFALLILAPVTISGVAL). At 124–129 (DVRTTV) the chain is on the cytoplasmic side. A helical transmembrane segment spans residues 130 to 149 (ILGAIAIGLLTFTAYFHLPL). The Extracellular segment spans residues 150-164 (ILADGSSLSVPRMFE). A helical membrane pass occupies residues 165–182 (FGFWLAIVIGILFLGLYS). The Cytoplasmic portion of the chain corresponds to 183 to 462 (RRVAIEIRSM…PLGENVLIQT (280 aa)). Residues 218–445 (AAAHELGTPL…IVEVIWPVDR (228 aa)) enclose the Histidine kinase domain. Residue His-221 is modified to Phosphohistidine; by autocatalysis.

The protein resides in the cell inner membrane. It carries out the reaction ATP + protein L-histidine = ADP + protein N-phospho-L-histidine.. In terms of biological role, member of the two-component regulatory system RegB/RegA. Involved in the positive regulation of photosynthesis gene expression in response to anaerobiosis. Also involved in positive regulation of the cbbI and cbbII Calvin cycle CO2 fixation operons, as well as in regulation of expression of genes involved in alternative CO2 fixation pathways. Phosphorylates RegA/PrrA. This Cereibacter sphaeroides (Rhodobacter sphaeroides) protein is Sensor histidine kinase RegB (regB).